The sequence spans 339 residues: tRNA dimethylallyltransferase (339 aa).

An ATP-binding site is contributed by glycine 36 to threonine 43. Threonine 38–threonine 43 is a binding site for substrate. The segment at aspartate 61–glutamine 64 is interaction with substrate tRNA.

Belongs to the IPP transferase family. As to quaternary structure, monomer. Mg(2+) serves as cofactor.

The enzyme catalyses adenosine(37) in tRNA + dimethylallyl diphosphate = N(6)-dimethylallyladenosine(37) in tRNA + diphosphate. Functionally, catalyzes the transfer of a dimethylallyl group onto the adenine at position 37 in tRNAs that read codons beginning with uridine, leading to the formation of N6-(dimethylallyl)adenosine (i(6)A). The chain is tRNA dimethylallyltransferase from Chlamydia trachomatis serovar A (strain ATCC VR-571B / DSM 19440 / HAR-13).